A 1363-amino-acid chain; its full sequence is Spike glycoprotein (1363 aa).

The N-terminal stretch at 1 to 13 (MFLILLISLPTAF) is a signal peptide. Residues 14–1307 (AVIGDLKCTT…GTYEYYVKWP (1294 aa)) lie on the Extracellular side of the membrane. The BetaCoV S1-NTD domain occupies 15-298 (VIGDLKCTTV…DFMSEIKCKT (284 aa)). Intrachain disulfides connect C21/C165, C160/C193, C172/C252, C286/C296, and C331/C356. 2 N-linked (GlcNAc...) asparagine; by host glycosylation sites follow: N59 and N133. N-linked (GlcNAc...) asparagine; by host glycosylation occurs at N198. The BetaCoV S1-CTD domain occupies 329–617 (PDCNIEAWLN…DVNSGTTCST (289 aa)). N359 carries an N-linked (GlcNAc...) asparagine; by host glycan. Cystine bridges form between C374-C427 and C386-C615. Residues N437, N649, N676, N696, N714, N739, and N788 are each glycosylated (N-linked (GlcNAc...) asparagine; by host). Fusion peptide regions lie at residues 914–935 (SAIE…VEAY) and 933–953 (EAYN…VQSY). N937 carries N-linked (GlcNAc...) asparagine; by host glycosylation. A disulfide bridge connects residues C938 and C949. Positions 1014–1064 (QKLIANAFNNALGAIQEGFDATNSALVKIQAVVNANAEALNNLLQQLSNRF) are heptad repeat 1. Positions 1043–1087 (QAVVNANAEALNNLLQQLSNRFGAISSSLQEILSRLDALEAQAQI) form a coiled coil. N-linked (GlcNAc...) asparagine; by host glycans are attached at residues N1194, N1224, N1234, N1253, N1267, and N1288. Positions 1258–1296 (APDLSLDYINVTFLDLQDEMNRLQEAIKVLNQSYINLKD) are heptad repeat 2. Positions 1269–1297 (TFLDLQDEMNRLQEAIKVLNQSYINLKDI) form a coiled coil. Residues 1308-1328 (WYVWLLIGFAGVAMLVLLFFI) form a helical membrane-spanning segment. Over 1329–1363 (CCCTGCGTSCFKKCGGCCDDYTGHQELVIKTSHED) the chain is Cytoplasmic. A KxHxx motif is present at residues 1359-1363 (TSHED).

This sequence belongs to the betacoronaviruses spike protein family. As to quaternary structure, homotrimer; each monomer consists of a S1 and a S2 subunit. The resulting peplomers protrude from the virus surface as spikes. Specific enzymatic cleavages in vivo yield mature proteins. The precursor is processed into S1 and S2 by host cell furin or another cellular protease to yield the mature S1 and S2 proteins. Additionally, a second cleavage leads to the release of a fusion peptide after viral attachment to host cell receptor. In terms of processing, the cytoplasmic Cys-rich domain is palmitoylated. Spike glycoprotein is digested within host endosomes.

It localises to the virion membrane. Its subcellular location is the host endoplasmic reticulum-Golgi intermediate compartment membrane. The protein resides in the host cell membrane. Functionally, attaches the virion to the cell membrane by interacting with host receptor, initiating the infection. In terms of biological role, mediates fusion of the virion and cellular membranes by acting as a class I viral fusion protein. Under the current model, the protein has at least three conformational states: pre-fusion native state, pre-hairpin intermediate state, and post-fusion hairpin state. During viral and target cell membrane fusion, the coiled coil regions (heptad repeats) assume a trimer-of-hairpins structure, positioning the fusion peptide in close proximity to the C-terminal region of the ectodomain. The formation of this structure appears to drive apposition and subsequent fusion of viral and target cell membranes. Its function is as follows. Acts as a viral fusion peptide which is unmasked following S2 cleavage occurring upon virus endocytosis. In Bovine coronavirus (strain 98TXSF-110-ENT) (BCoV-ENT), this protein is Spike glycoprotein.